Consider the following 183-residue polypeptide: Adenine phosphoribosyltransferase (183 aa).

This sequence belongs to the purine/pyrimidine phosphoribosyltransferase family. In terms of assembly, homodimer.

It localises to the cytoplasm. It carries out the reaction AMP + diphosphate = 5-phospho-alpha-D-ribose 1-diphosphate + adenine. The protein operates within purine metabolism; AMP biosynthesis via salvage pathway; AMP from adenine: step 1/1. Functionally, catalyzes a salvage reaction resulting in the formation of AMP, that is energically less costly than de novo synthesis. The protein is Adenine phosphoribosyltransferase of Escherichia coli (strain K12 / MC4100 / BW2952).